Here is a 356-residue protein sequence, read N- to C-terminus: Tyrosine recombinase XerS (356 aa).

A Core-binding (CB) domain is found at 16–121 (IMPWYVLDYY…ALSSLYKYLT (106 aa)). The 186-residue stretch at 169-354 (AFLDYVDKEY…VNDEQKTALD (186 aa)) folds into the Tyr recombinase domain. Catalysis depends on residues R210, K234, H306, R309, and H332. Catalysis depends on Y341, which acts as the O-(3'-phospho-DNA)-tyrosine intermediate.

The protein belongs to the 'phage' integrase family. XerS subfamily.

It is found in the cytoplasm. With respect to regulation, ftsK is required for recombination. In terms of biological role, site-specific tyrosine recombinase, which acts by catalyzing the cutting and rejoining of the recombining DNA molecules. Essential to convert dimers of the bacterial chromosome into monomers to permit their segregation at cell division. The protein is Tyrosine recombinase XerS of Streptococcus pyogenes serotype M12 (strain MGAS9429).